The chain runs to 189 residues: Potassium-transporting ATPase KdpC subunit (189 aa).

A helical transmembrane segment spans residues 10–30 (VIFAMLTLICGVIYPYAITGI).

Belongs to the KdpC family. The system is composed of three essential subunits: KdpA, KdpB and KdpC.

It is found in the cell inner membrane. Its function is as follows. Part of the high-affinity ATP-driven potassium transport (or Kdp) system, which catalyzes the hydrolysis of ATP coupled with the electrogenic transport of potassium into the cytoplasm. This subunit acts as a catalytic chaperone that increases the ATP-binding affinity of the ATP-hydrolyzing subunit KdpB by the formation of a transient KdpB/KdpC/ATP ternary complex. The sequence is that of Potassium-transporting ATPase KdpC subunit from Janthinobacterium sp. (strain Marseille) (Minibacterium massiliensis).